A 151-amino-acid chain; its full sequence is MESWLFLALVLLIAIFGHNSSLIIATVIVMVLKLIPYTAKWLPLIQHKGINWGVTVISVAILIPIATGQIGFNDLWAAFKTPAGWIAVGMGIAVAILSKYGVNQLAAVPQVTVALVLGTIIGVVAFKGIAAGPVIASGMTYCIVTLLNLHF.

Helical transmembrane passes span 4–24, 52–72, 77–97, and 115–135; these read WLFLALVLLIAIFGHNSSLII, WGVTVISVAILIPIATGQIGF, AAFKTPAGWIAVGMGIAVAIL, and LVLGTIIGVVAFKGIAAGPVI.

Belongs to the UPF0756 family.

It localises to the cell membrane. The chain is UPF0756 membrane protein Lreu_0946 from Limosilactobacillus reuteri (strain DSM 20016) (Lactobacillus reuteri).